Here is a 323-residue protein sequence, read N- to C-terminus: ADP-L-glycero-D-manno-heptose-6-epimerase (323 aa).

Residues 10 to 11, 31 to 32, lysine 38, arginine 53, 75 to 79, and asparagine 92 contribute to the NADP(+) site; these read FI, DN, and MGACS. The Proton acceptor role is filled by tyrosine 143. Lysine 147 lines the NADP(+) pocket. Asparagine 170 contributes to the substrate binding site. NADP(+) is bound by residues valine 171 and lysine 179. Residue lysine 179 is the Proton acceptor of the active site. Residues aspartate 181, lysine 188, 202 to 205, arginine 216, and tyrosine 281 each bind substrate; that span reads FRSC.

Belongs to the NAD(P)-dependent epimerase/dehydratase family. HldD subfamily. In terms of assembly, homopentamer. It depends on NADP(+) as a cofactor.

The catalysed reaction is ADP-D-glycero-beta-D-manno-heptose = ADP-L-glycero-beta-D-manno-heptose. The protein operates within nucleotide-sugar biosynthesis; ADP-L-glycero-beta-D-manno-heptose biosynthesis; ADP-L-glycero-beta-D-manno-heptose from D-glycero-beta-D-manno-heptose 7-phosphate: step 4/4. Functionally, catalyzes the interconversion between ADP-D-glycero-beta-D-manno-heptose and ADP-L-glycero-beta-D-manno-heptose via an epimerization at carbon 6 of the heptose. The polypeptide is ADP-L-glycero-D-manno-heptose-6-epimerase (Nitratidesulfovibrio vulgaris (strain DP4) (Desulfovibrio vulgaris)).